The sequence spans 284 residues: MEMO1 family protein M1425_2054 (284 aa).

Belongs to the MEMO1 family.

The protein is MEMO1 family protein M1425_2054 of Saccharolobus islandicus (strain M.14.25 / Kamchatka #1) (Sulfolobus islandicus).